Reading from the N-terminus, the 290-residue chain is Diaminopimelate epimerase (290 aa).

The substrate site is built by asparagine 14 and asparagine 67. Residue cysteine 76 is the Proton donor of the active site. Substrate contacts are provided by residues 77–78, asparagine 166, asparagine 199, and 217–218; these read GN and ER. Cysteine 226 (proton acceptor) is an active-site residue. Position 227-228 (227-228) interacts with substrate; sequence GT.

It belongs to the diaminopimelate epimerase family. In terms of assembly, homodimer.

The protein resides in the cytoplasm. It catalyses the reaction (2S,6S)-2,6-diaminopimelate = meso-2,6-diaminopimelate. It participates in amino-acid biosynthesis; L-lysine biosynthesis via DAP pathway; DL-2,6-diaminopimelate from LL-2,6-diaminopimelate: step 1/1. Functionally, catalyzes the stereoinversion of LL-2,6-diaminopimelate (L,L-DAP) to meso-diaminopimelate (meso-DAP), a precursor of L-lysine and an essential component of the bacterial peptidoglycan. This is Diaminopimelate epimerase from Geobacillus thermodenitrificans (strain NG80-2).